The following is a 438-amino-acid chain: Serine hydroxymethyltransferase (438 aa).

(6S)-5,6,7,8-tetrahydrofolate is bound by residues L133 and 137–139; that span reads GHL. K242 is subject to N6-(pyridoxal phosphate)lysine.

This sequence belongs to the SHMT family. As to quaternary structure, homodimer. It depends on pyridoxal 5'-phosphate as a cofactor.

It localises to the cytoplasm. The enzyme catalyses (6R)-5,10-methylene-5,6,7,8-tetrahydrofolate + glycine + H2O = (6S)-5,6,7,8-tetrahydrofolate + L-serine. It participates in one-carbon metabolism; tetrahydrofolate interconversion. The protein operates within amino-acid biosynthesis; glycine biosynthesis; glycine from L-serine: step 1/1. Catalyzes the reversible interconversion of serine and glycine with tetrahydrofolate (THF) serving as the one-carbon carrier. This reaction serves as the major source of one-carbon groups required for the biosynthesis of purines, thymidylate, methionine, and other important biomolecules. Also exhibits THF-independent aldolase activity toward beta-hydroxyamino acids, producing glycine and aldehydes, via a retro-aldol mechanism. The polypeptide is Serine hydroxymethyltransferase (Brucella melitensis biotype 2 (strain ATCC 23457)).